The following is a 337-amino-acid chain: Protein-methionine-sulfoxide reductase catalytic subunit MsrP (337 aa).

Positions 1 to 48 (MLIKIPSRSDCSESEVTSETLYLSRRRLLGASFAGLALASGLPRLGFA) form a signal peptide, tat-type signal. Mo-molybdopterin is bound by residues asparagine 94, 97–98 (YE), cysteine 152, threonine 187, asparagine 237, arginine 242, and 253–255 (SIK).

Belongs to the MsrP family. As to quaternary structure, heterodimer of a catalytic subunit (MsrP) and a heme-binding subunit (MsrQ). Requires Mo-molybdopterin as cofactor. In terms of processing, predicted to be exported by the Tat system. The position of the signal peptide cleavage has not been experimentally proven.

It localises to the periplasm. The enzyme catalyses L-methionyl-[protein] + a quinone + H2O = L-methionyl-(S)-S-oxide-[protein] + a quinol. It carries out the reaction L-methionyl-[protein] + a quinone + H2O = L-methionyl-(R)-S-oxide-[protein] + a quinol. In terms of biological role, part of the MsrPQ system that repairs oxidized periplasmic proteins containing methionine sulfoxide residues (Met-O), using respiratory chain electrons. Thus protects these proteins from oxidative-stress damage caused by reactive species of oxygen and chlorine generated by the host defense mechanisms. MsrPQ is essential for the maintenance of envelope integrity under bleach stress, rescuing a wide series of structurally unrelated periplasmic proteins from methionine oxidation. The catalytic subunit MsrP is non-stereospecific, being able to reduce both (R-) and (S-) diastereoisomers of methionine sulfoxide. The polypeptide is Protein-methionine-sulfoxide reductase catalytic subunit MsrP (Pseudomonas aeruginosa (strain ATCC 15692 / DSM 22644 / CIP 104116 / JCM 14847 / LMG 12228 / 1C / PRS 101 / PAO1)).